Reading from the N-terminus, the 141-residue chain is MQQTAWAPRTSGIAGCGAGGVVMAIASVTLVTDTPGRVLTGVAALGLILFASATWRARPRLAITPDGLAIRGWFRTQLLRHSNIKIIRIDEFRRYGRLVRLLEIETVSGGLLILSRWDLGTDPVEVLDALTAAGYAGRGQR.

A run of 2 helical transmembrane segments spans residues 12 to 32 (GIAG…TLVT) and 35 to 55 (PGRV…SATW).

Its subcellular location is the cell membrane. This is an uncharacterized protein from Mycobacterium tuberculosis (strain CDC 1551 / Oshkosh).